The primary structure comprises 369 residues: UDP-N-acetylglucosamine--N-acetylmuramyl-(pentapeptide) pyrophosphoryl-undecaprenol N-acetylglucosamine transferase (369 aa).

UDP-N-acetyl-alpha-D-glucosamine is bound by residues 10 to 12 (TGG), asparagine 124, arginine 166, serine 196, and glutamine 300.

This sequence belongs to the glycosyltransferase 28 family. MurG subfamily.

The protein localises to the cell membrane. The enzyme catalyses di-trans,octa-cis-undecaprenyl diphospho-N-acetyl-alpha-D-muramoyl-L-alanyl-D-glutamyl-meso-2,6-diaminopimeloyl-D-alanyl-D-alanine + UDP-N-acetyl-alpha-D-glucosamine = di-trans,octa-cis-undecaprenyl diphospho-[N-acetyl-alpha-D-glucosaminyl-(1-&gt;4)]-N-acetyl-alpha-D-muramoyl-L-alanyl-D-glutamyl-meso-2,6-diaminopimeloyl-D-alanyl-D-alanine + UDP + H(+). Its pathway is cell wall biogenesis; peptidoglycan biosynthesis. In terms of biological role, cell wall formation. Catalyzes the transfer of a GlcNAc subunit on undecaprenyl-pyrophosphoryl-MurNAc-pentapeptide (lipid intermediate I) to form undecaprenyl-pyrophosphoryl-MurNAc-(pentapeptide)GlcNAc (lipid intermediate II). This chain is UDP-N-acetylglucosamine--N-acetylmuramyl-(pentapeptide) pyrophosphoryl-undecaprenol N-acetylglucosamine transferase, found in Desulfitobacterium hafniense (strain DSM 10664 / DCB-2).